Consider the following 185-residue polypeptide: MADLKQVYHDKVVPELQAKFGYSNVMQVPRLQKIVVNMGVGEAIADKNFLNNAIGNLEAITGQKAQTTYAKKSIAGFKLREGQAVGCRVTLRRRQMWEFLDRLINAALPRVRDFRGVSEKAFDGRGNYTMGIKEQIIFPEIDYDKVDKVRGMDICIVTSAKTDDEARQLLAGFNMPFRKKEGNNG.

Belongs to the universal ribosomal protein uL5 family. As to quaternary structure, part of the 50S ribosomal subunit; part of the 5S rRNA/L5/L18/L25 subcomplex. Contacts the 5S rRNA and the P site tRNA. Forms a bridge to the 30S subunit in the 70S ribosome.

In terms of biological role, this is one of the proteins that bind and probably mediate the attachment of the 5S RNA into the large ribosomal subunit, where it forms part of the central protuberance. In the 70S ribosome it contacts protein S13 of the 30S subunit (bridge B1b), connecting the 2 subunits; this bridge is implicated in subunit movement. Contacts the P site tRNA; the 5S rRNA and some of its associated proteins might help stabilize positioning of ribosome-bound tRNAs. This Magnetococcus marinus (strain ATCC BAA-1437 / JCM 17883 / MC-1) protein is Large ribosomal subunit protein uL5.